The primary structure comprises 122 residues: ATP-dependent Clp protease adapter protein ClpS (122 aa).

Residues 1–33 (MHAPSQIRLTFNQDHPEPHEHEDEGAGLAVQES) form a disordered region. Basic and acidic residues predominate over residues 14-24 (DHPEPHEHEDE).

This sequence belongs to the ClpS family. As to quaternary structure, binds to the N-terminal domain of the chaperone ClpA.

Functionally, involved in the modulation of the specificity of the ClpAP-mediated ATP-dependent protein degradation. The sequence is that of ATP-dependent Clp protease adapter protein ClpS from Pseudomonas aeruginosa (strain ATCC 15692 / DSM 22644 / CIP 104116 / JCM 14847 / LMG 12228 / 1C / PRS 101 / PAO1).